We begin with the raw amino-acid sequence, 344 residues long: Putative replication factor C small subunit L499 (344 aa).

ATP is bound at residue 57-64; that stretch reads GPSGSGKT.

Belongs to the activator 1 small subunits family. RfcS subfamily.

In terms of biological role, part of the RFC clamp loader complex which loads the PCNA sliding clamp onto DNA. This is Putative replication factor C small subunit L499 from Acanthamoeba polyphaga mimivirus (APMV).